A 305-amino-acid chain; its full sequence is Ubiquinone biosynthesis protein COQ4 homolog, mitochondrial (305 aa).

4 residues coordinate Zn(2+): His150, Asp151, His154, and Glu166.

Belongs to the COQ4 family. As to quaternary structure, component of a multi-subunit COQ enzyme complex. Requires Zn(2+) as cofactor.

Its subcellular location is the mitochondrion inner membrane. The enzyme catalyses a 4-hydroxy-3-methoxy-5-(all-trans-polyprenyl)benzoate + H(+) = a 2-methoxy-6-(all-trans-polyprenyl)phenol + CO2. It participates in cofactor biosynthesis; ubiquinone biosynthesis. Its function is as follows. Lyase that catalyzes the C1-decarboxylation of 4-hydroxy-3-methoxy-5-(all-trans-polyprenyl)benzoic acid into 2-methoxy-6-(all-trans-polyprenyl)phenol during ubiquinone biosynthesis. The chain is Ubiquinone biosynthesis protein COQ4 homolog, mitochondrial from Cryptosporidium parvum (strain Iowa II).